Consider the following 124-residue polypeptide: Small ribosomal subunit protein uS12c (124 aa).

The protein belongs to the universal ribosomal protein uS12 family. As to quaternary structure, part of the 30S ribosomal subunit.

It localises to the plastid. The protein localises to the chloroplast. With S4 and S5 plays an important role in translational accuracy. Located at the interface of the 30S and 50S subunits. In Oryza nivara (Indian wild rice), this protein is Small ribosomal subunit protein uS12c (rps12).